The following is a 305-amino-acid chain: Lipoyl synthase (305 aa).

[4Fe-4S] cluster is bound by residues Cys-41, Cys-46, Cys-52, Cys-68, Cys-72, Cys-75, and Ser-281. The 217-residue stretch at 54-270 folds into the Radical SAM core domain; the sequence is GARRTATFMI…RKVAMDKGFK (217 aa). Residues 283-298 show a composition bias toward basic and acidic residues; that stretch reads HADEQVNEAAKEKQRQ. Positions 283–305 are disordered; that stretch reads HADEQVNEAAKEKQRQGEAQLNS.

The protein belongs to the radical SAM superfamily. Lipoyl synthase family. Requires [4Fe-4S] cluster as cofactor.

It is found in the cytoplasm. It catalyses the reaction [[Fe-S] cluster scaffold protein carrying a second [4Fe-4S](2+) cluster] + N(6)-octanoyl-L-lysyl-[protein] + 2 oxidized [2Fe-2S]-[ferredoxin] + 2 S-adenosyl-L-methionine + 4 H(+) = [[Fe-S] cluster scaffold protein] + N(6)-[(R)-dihydrolipoyl]-L-lysyl-[protein] + 4 Fe(3+) + 2 hydrogen sulfide + 2 5'-deoxyadenosine + 2 L-methionine + 2 reduced [2Fe-2S]-[ferredoxin]. It participates in protein modification; protein lipoylation via endogenous pathway; protein N(6)-(lipoyl)lysine from octanoyl-[acyl-carrier-protein]. In terms of biological role, catalyzes the radical-mediated insertion of two sulfur atoms into the C-6 and C-8 positions of the octanoyl moiety bound to the lipoyl domains of lipoate-dependent enzymes, thereby converting the octanoylated domains into lipoylated derivatives. This Staphylococcus aureus (strain bovine RF122 / ET3-1) protein is Lipoyl synthase.